A 574-amino-acid chain; its full sequence is Proline--tRNA ligase (574 aa).

Belongs to the class-II aminoacyl-tRNA synthetase family. ProS type 1 subfamily. As to quaternary structure, homodimer.

Its subcellular location is the cytoplasm. The enzyme catalyses tRNA(Pro) + L-proline + ATP = L-prolyl-tRNA(Pro) + AMP + diphosphate. Catalyzes the attachment of proline to tRNA(Pro) in a two-step reaction: proline is first activated by ATP to form Pro-AMP and then transferred to the acceptor end of tRNA(Pro). As ProRS can inadvertently accommodate and process non-cognate amino acids such as alanine and cysteine, to avoid such errors it has two additional distinct editing activities against alanine. One activity is designated as 'pretransfer' editing and involves the tRNA(Pro)-independent hydrolysis of activated Ala-AMP. The other activity is designated 'posttransfer' editing and involves deacylation of mischarged Ala-tRNA(Pro). The misacylated Cys-tRNA(Pro) is not edited by ProRS. In Thioalkalivibrio sulfidiphilus (strain HL-EbGR7), this protein is Proline--tRNA ligase.